A 430-amino-acid polypeptide reads, in one-letter code: Asparagine--tRNA ligase (430 aa).

Belongs to the class-II aminoacyl-tRNA synthetase family. Homodimer.

Its subcellular location is the cytoplasm. The catalysed reaction is tRNA(Asn) + L-asparagine + ATP = L-asparaginyl-tRNA(Asn) + AMP + diphosphate + H(+). This is Asparagine--tRNA ligase from Listeria monocytogenes serovar 1/2a (strain ATCC BAA-679 / EGD-e).